The primary structure comprises 713 residues: Methionine--tRNA ligase (713 aa).

The short motif at 31 to 41 (PYANGSIHLGH) is the 'HIGH' region element. The Zn(2+) site is built by C162, C165, C175, and C178. Residues 348–352 (KMSKS) carry the 'KMSKS' region motif. ATP is bound at residue K351. The 105-residue stretch at 609 to 713 (DFAKIDLRIV…DGAKAGMRVK (105 aa)) folds into the tRNA-binding domain.

The protein belongs to the class-I aminoacyl-tRNA synthetase family. MetG type 1 subfamily. Homodimer. Requires Zn(2+) as cofactor.

The protein localises to the cytoplasm. It carries out the reaction tRNA(Met) + L-methionine + ATP = L-methionyl-tRNA(Met) + AMP + diphosphate. Is required not only for elongation of protein synthesis but also for the initiation of all mRNA translation through initiator tRNA(fMet) aminoacylation. This Colwellia psychrerythraea (strain 34H / ATCC BAA-681) (Vibrio psychroerythus) protein is Methionine--tRNA ligase.